The chain runs to 56 residues: Large ribosomal subunit protein bL32 (56 aa).

A disordered region spans residues M1–E35. The segment covering T9–L22 has biased composition (basic residues).

This sequence belongs to the bacterial ribosomal protein bL32 family.

This is Large ribosomal subunit protein bL32 from Blochmanniella pennsylvanica (strain BPEN).